Consider the following 305-residue polypeptide: Putative lipid kinase SAS0691 (305 aa).

The 137-residue stretch at 3–139 (NKYTHGVLFY…YDVIKINNQY (137 aa)) folds into the DAGKc domain. Residues serine 44, 74-80 (GDGTVNE), and threonine 101 each bind ATP. Residues serine 220, aspartate 223, and glutamate 225 each coordinate Mg(2+). Glutamate 281 (proton acceptor) is an active-site residue.

The protein belongs to the diacylglycerol/lipid kinase family. Mg(2+) serves as cofactor.

In terms of biological role, may catalyze the ATP-dependent phosphorylation of lipids other than diacylglycerol (DAG). This chain is Putative lipid kinase SAS0691, found in Staphylococcus aureus (strain MSSA476).